Here is a 414-residue protein sequence, read N- to C-terminus: Serine/threonine transporter SstT (414 aa).

8 helical membrane passes run 22–42 (GLVLGIVVALISAPLQETIGF), 54–74 (IFVKALRAVAPILIFFLVMAA), 89–109 (IIVLYLLGTFLAAFVAVIAGF), 148–168 (AIFKANFIGVLAWSIGLGLAL), 189–209 (IVHVIISFAPFGVFGLVAETL), 223–243 (LLAVLIGTMLFTAFVVNPILV), 305–325 (MAGAAITITILTLAAVHTLGL), and 337–357 (IVAALCACGASGVAGGSLLLI).

The protein belongs to the dicarboxylate/amino acid:cation symporter (DAACS) (TC 2.A.23) family.

It is found in the cell inner membrane. It carries out the reaction L-serine(in) + Na(+)(in) = L-serine(out) + Na(+)(out). The catalysed reaction is L-threonine(in) + Na(+)(in) = L-threonine(out) + Na(+)(out). Functionally, involved in the import of serine and threonine into the cell, with the concomitant import of sodium (symport system). The polypeptide is Serine/threonine transporter SstT (Haemophilus influenzae (strain PittGG)).